Reading from the N-terminus, the 586-residue chain is Asparagine synthetase [glutamine-hydrolyzing] 1 (586 aa).

The active-site For GATase activity is the Cys-2. A Glutamine amidotransferase type-2 domain is found at 2–185 (CGILAVLGCS…PGHLYSSRER (184 aa)). Residues 50 to 54 (RLAIV), 75 to 77 (NGE), and Asp-98 contribute to the L-glutamine site. An Asparagine synthetase domain is found at 193-516 (PTWFSESIPS…PQNSARLTVP (324 aa)). ATP contacts are provided by residues Leu-231, Val-267, and 341–342 (SG).

The enzyme catalyses L-aspartate + L-glutamine + ATP + H2O = L-asparagine + L-glutamate + AMP + diphosphate + H(+). It functions in the pathway amino-acid biosynthesis; L-asparagine biosynthesis; L-asparagine from L-aspartate (L-Gln route): step 1/1. The polypeptide is Asparagine synthetase [glutamine-hydrolyzing] 1 (AS1) (Lotus japonicus (Lotus corniculatus var. japonicus)).